Here is a 498-residue protein sequence, read N- to C-terminus: ATP synthase subunit beta, chloroplastic (498 aa).

172–179 (GGAGVGKT) is an ATP binding site.

Belongs to the ATPase alpha/beta chains family. As to quaternary structure, F-type ATPases have 2 components, CF(1) - the catalytic core - and CF(0) - the membrane proton channel. CF(1) has five subunits: alpha(3), beta(3), gamma(1), delta(1), epsilon(1). CF(0) has four main subunits: a(1), b(1), b'(1) and c(9-12).

It is found in the plastid. Its subcellular location is the chloroplast thylakoid membrane. It catalyses the reaction ATP + H2O + 4 H(+)(in) = ADP + phosphate + 5 H(+)(out). Its function is as follows. Produces ATP from ADP in the presence of a proton gradient across the membrane. The catalytic sites are hosted primarily by the beta subunits. In Elaeis oleifera (American oil palm), this protein is ATP synthase subunit beta, chloroplastic.